The primary structure comprises 357 residues: MLFSSRFLALAALLGQALALPIDDFSQSDAGLKVKLTSMGNTRVKAVVTNEGEQEISFLKFNTFFDSAPTQKVQIMKAGSLIPFSGVDFYFNMANLPAEAFKTLAPGASAEAEFDIAATADLSPGGSYTVSSAGFLRIAGGNGTAITGRMRYRSNQMKLNVDGDMAAKVQSAVPTIEKRTRIDGNSCRGNYGQLLSRALQGCSSYAGRAAQAASNGDAQKFQEYFKTNSPQVRQSVAARFQAIVQECSSASNGKTTYLCEDRFRFCQPGLIAYTIPTQSVVANCPSYWKLPPVVNRGLEPDHGYVVVHEFTHATSIFSPGTEDHGYGYEECRRLNAQQSLSNADNYSLFAAAVSRGA.

Residues 1–19 (MLFSSRFLALAALLGQALA) form the signal peptide. A propeptide spanning residues 20–179 (LPIDDFSQSD…QSAVPTIEKR (160 aa)) is cleaved from the precursor. 2 disulfides stabilise this stretch: cysteine 187–cysteine 259 and cysteine 266–cysteine 284. Histidine 308 lines the Zn(2+) pocket. Glutamate 309 is an active-site residue. Histidine 312 and aspartate 323 together coordinate Zn(2+).

The protein belongs to the peptidase M35 family. Zn(2+) serves as cofactor.

The protein resides in the secreted. The enzyme catalyses Preferential cleavage of bonds with hydrophobic residues in P1'. Also 3-Asn-|-Gln-4 and 8-Gly-|-Ser-9 bonds in insulin B chain.. Its function is as follows. Secreted metalloproteinase that allows assimilation of proteinaceous substrates. Shows high activities on basic nuclear substrates such as histone and protamine. The polypeptide is Neutral protease 2 homolog UREG_02006 (Uncinocarpus reesii (strain UAMH 1704)).